Here is a 1042-residue protein sequence, read N- to C-terminus: Isoleucine--tRNA ligase (1042 aa).

Positions 48 to 58 match the 'HIGH' region motif; sequence PFATGLPHFGH. The 'KMSKS' region motif lies at 594-598; that stretch reads KMSKS. Residue Lys-597 participates in ATP binding.

The protein belongs to the class-I aminoacyl-tRNA synthetase family. IleS type 2 subfamily. As to quaternary structure, monomer. The cofactor is Zn(2+).

The protein localises to the cytoplasm. The enzyme catalyses tRNA(Ile) + L-isoleucine + ATP = L-isoleucyl-tRNA(Ile) + AMP + diphosphate. Functionally, catalyzes the attachment of isoleucine to tRNA(Ile). As IleRS can inadvertently accommodate and process structurally similar amino acids such as valine, to avoid such errors it has two additional distinct tRNA(Ile)-dependent editing activities. One activity is designated as 'pretransfer' editing and involves the hydrolysis of activated Val-AMP. The other activity is designated 'posttransfer' editing and involves deacylation of mischarged Val-tRNA(Ile). The sequence is that of Isoleucine--tRNA ligase from Borreliella afzelii (strain PKo) (Borrelia afzelii).